A 197-amino-acid polypeptide reads, in one-letter code: ATP-dependent Clp protease proteolytic subunit (197 aa).

Serine 98 serves as the catalytic Nucleophile. The active site involves histidine 123.

It belongs to the peptidase S14 family. As to quaternary structure, fourteen ClpP subunits assemble into 2 heptameric rings which stack back to back to give a disk-like structure with a central cavity, resembling the structure of eukaryotic proteasomes.

The protein localises to the cytoplasm. The enzyme catalyses Hydrolysis of proteins to small peptides in the presence of ATP and magnesium. alpha-casein is the usual test substrate. In the absence of ATP, only oligopeptides shorter than five residues are hydrolyzed (such as succinyl-Leu-Tyr-|-NHMec, and Leu-Tyr-Leu-|-Tyr-Trp, in which cleavage of the -Tyr-|-Leu- and -Tyr-|-Trp bonds also occurs).. In terms of biological role, cleaves peptides in various proteins in a process that requires ATP hydrolysis. Has a chymotrypsin-like activity. Plays a major role in the degradation of misfolded proteins. The polypeptide is ATP-dependent Clp protease proteolytic subunit (Ligilactobacillus salivarius (strain UCC118) (Lactobacillus salivarius)).